Reading from the N-terminus, the 419-residue chain is UDP-N-acetylglucosamine 1-carboxyvinyltransferase (419 aa).

22 to 23 (KN) lines the phosphoenolpyruvate pocket. Residue arginine 92 participates in UDP-N-acetyl-alpha-D-glucosamine binding. Cysteine 116 acts as the Proton donor in catalysis. Cysteine 116 is modified (2-(S-cysteinyl)pyruvic acid O-phosphothioketal). Residues aspartate 306 and isoleucine 328 each coordinate UDP-N-acetyl-alpha-D-glucosamine.

This sequence belongs to the EPSP synthase family. MurA subfamily.

Its subcellular location is the cytoplasm. The catalysed reaction is phosphoenolpyruvate + UDP-N-acetyl-alpha-D-glucosamine = UDP-N-acetyl-3-O-(1-carboxyvinyl)-alpha-D-glucosamine + phosphate. It participates in cell wall biogenesis; peptidoglycan biosynthesis. Its function is as follows. Cell wall formation. Adds enolpyruvyl to UDP-N-acetylglucosamine. This chain is UDP-N-acetylglucosamine 1-carboxyvinyltransferase, found in Pseudoalteromonas translucida (strain TAC 125).